The sequence spans 318 residues: Aspartate carbamoyltransferase catalytic subunit (318 aa).

Residues arginine 66 and threonine 67 each coordinate carbamoyl phosphate. Lysine 94 contributes to the L-aspartate binding site. Carbamoyl phosphate-binding residues include arginine 116, histidine 144, and glutamine 147. L-aspartate-binding residues include arginine 177 and arginine 231. The carbamoyl phosphate site is built by glycine 272 and proline 273.

This sequence belongs to the aspartate/ornithine carbamoyltransferase superfamily. ATCase family. Heterododecamer (2C3:3R2) of six catalytic PyrB chains organized as two trimers (C3), and six regulatory PyrI chains organized as three dimers (R2).

The catalysed reaction is carbamoyl phosphate + L-aspartate = N-carbamoyl-L-aspartate + phosphate + H(+). Its pathway is pyrimidine metabolism; UMP biosynthesis via de novo pathway; (S)-dihydroorotate from bicarbonate: step 2/3. Catalyzes the condensation of carbamoyl phosphate and aspartate to form carbamoyl aspartate and inorganic phosphate, the committed step in the de novo pyrimidine nucleotide biosynthesis pathway. In Frankia casuarinae (strain DSM 45818 / CECT 9043 / HFP020203 / CcI3), this protein is Aspartate carbamoyltransferase catalytic subunit.